A 780-amino-acid chain; its full sequence is APC membrane recruitment protein 3 (780 aa).

Residues 20–32 (KLIDSPAKEDPDK) show a composition bias toward basic and acidic residues. Disordered stretches follow at residues 20–59 (KLID…QGYG), 341–407 (ELPL…FPRD), 547–569 (KGRE…AHSG), 582–617 (GEPA…TMTS), 635–659 (KELG…GSAL), 706–729 (KNPI…SPQD), and 749–780 (LGPQ…SVGS). The segment covering 354–376 (SKASSIDTGTPKSEQPESVSTSD) has biased composition (polar residues). A compositionally biased stretch (polar residues) spans 602–617 (QDFSEGQSSSEATMTS). A compositionally biased stretch (polar residues) spans 753–763 (ACSSVDSQPQQ).

It belongs to the Amer family.

It localises to the cell membrane. Regulator of the canonical Wnt signaling pathway. Acts by specifically binding phosphatidylinositol 4,5-bisphosphate (PtdIns(4,5)P2), translocating to the cell membrane. In Mus musculus (Mouse), this protein is APC membrane recruitment protein 3 (Amer3).